The following is a 206-amino-acid chain: Outer-membrane lipoprotein carrier protein (206 aa).

The N-terminal stretch at 1–23 is a signal peptide; the sequence is MKPLFPMLTAAAIAAGLAAPAQA.

Belongs to the LolA family. As to quaternary structure, monomer.

It is found in the periplasm. Functionally, participates in the translocation of lipoproteins from the inner membrane to the outer membrane. Only forms a complex with a lipoprotein if the residue after the N-terminal Cys is not an aspartate (The Asp acts as a targeting signal to indicate that the lipoprotein should stay in the inner membrane). The protein is Outer-membrane lipoprotein carrier protein of Chromobacterium violaceum (strain ATCC 12472 / DSM 30191 / JCM 1249 / CCUG 213 / NBRC 12614 / NCIMB 9131 / NCTC 9757 / MK).